A 437-amino-acid polypeptide reads, in one-letter code: MSNDFMLEDDENYDFEFEDDDDDMIEPYVDVENCYYNSKSLKEENPESALTSFYSIVEKCEGEQNEWAFKALKQITKINFQLKKYDDMLQSYQRLLGYTNWLSITKNYSEKSIYNIVEYASSCENTEFLEKFYDVTTKALQNLNNERLMLKVLMHVARFLLTQKNYHKFKYLLRQMHELLSDENNSVADQNRGTHLLELYSLEIQMYSDIEDNKRLKELYQSSLRVKTAIPHPRIMGIIRECGGKMHMQENQWSEAQTNFFESFKSYDEAGSSDRIRVLKYLVLANMLSESEINPFDSPETQPYKDNPHIIAMTKLVEAYQIRDITAVERILQTYQHDILDDDFIRQYVDKILYSIRSQVLIELVKPYTSVKLSLLAKKLGVSISIIEQALVGLIIDERVNGKIDMVNEVFTISQPKNTIHNQLVEDVQKLWNTATK.

Positions 249-418 (QENQWSEAQT…EVFTISQPKN (170 aa)) constitute a PCI domain.

It belongs to the CSN2 family. In terms of assembly, component of the COP9 signalosome (CSN) complex composed of at least csn1, csn2, csn4 and csn5 subunits.

It is found in the cytoplasm. It localises to the nucleus. Its function is as follows. Component of the COP9 signalosome (CSN) complex that acts as an regulator of the ubiquitin (Ubl) conjugation pathway by mediating the deneddylation of the cullin subunit of SCF-type E3 ubiquitin-protein ligase complexes. Required, indirectly, for activation of ribonucleotide reductase through the degradation of the protein spd1, thereby supplying deoxyribonucleotides for DNA replication and repair. The chain is COP9 signalosome complex subunit 2 (csn2) from Schizosaccharomyces pombe (strain 972 / ATCC 24843) (Fission yeast).